The chain runs to 336 residues: Ornithine carbamoyltransferase, catabolic (336 aa).

Carbamoyl phosphate-binding positions include 62–65 (STRT), Q89, R113, and 140–143 (HPTQ). L-ornithine is bound by residues N172, D236, and 240–241 (SM). Residues 277 to 278 (CL) and R322 contribute to the carbamoyl phosphate site.

It belongs to the aspartate/ornithine carbamoyltransferase superfamily. OTCase family.

It localises to the cytoplasm. The enzyme catalyses carbamoyl phosphate + L-ornithine = L-citrulline + phosphate + H(+). Its pathway is amino-acid degradation; L-arginine degradation via ADI pathway; carbamoyl phosphate from L-arginine: step 2/2. Functionally, reversibly catalyzes the transfer of the carbamoyl group from carbamoyl phosphate (CP) to the N(epsilon) atom of ornithine (ORN) to produce L-citrulline. This chain is Ornithine carbamoyltransferase, catabolic, found in Staphylococcus aureus (strain MSSA476).